We begin with the raw amino-acid sequence, 247 residues long: DNA polymerase sliding clamp (247 aa).

Belongs to the PCNA family. Homotrimer. The subunits circularize to form a toroid; DNA passes through its center. Replication factor C (RFC) is required to load the toroid on the DNA.

Functionally, sliding clamp subunit that acts as a moving platform for DNA processing. Responsible for tethering the catalytic subunit of DNA polymerase and other proteins to DNA during high-speed replication. The polypeptide is DNA polymerase sliding clamp (Methanocorpusculum labreanum (strain ATCC 43576 / DSM 4855 / Z)).